The sequence spans 383 residues: La protein homolog (383 aa).

Positions 1–43 (MTEVEAKATATEETTKEEEEAPETTAEQTEESAQETSENVSKL) are disordered. The span at 15 to 33 (TKEEEEAPETTAEQTEESA) shows a compositional bias: acidic residues. Residues 37 to 129 (SENVSKLEAS…RRHPERPLPE (93 aa)) enclose the HTH La-type RNA-binding domain. In terms of domain architecture, RRM spans 141 to 228 (RTVYVKGFAP…RKMQDDYFEE (88 aa)). Residues 249-368 (HLPKGASVHL…RTPEGRQASR (120 aa)) enclose the xRRM domain. Positions 343–383 (KDQQARRQASNARNKGRTPEGRQASRPPQEWRRKAKGGRGE) are disordered.

It is found in the nucleus. The protein localises to the cytoplasm. Its function is as follows. May be involved in transcription termination by RNA polymerase III. Binds RNA and DNA. Binds to the 3' end of the minus strand of Sindbis virus RNA. This may be significant for Sindbis virus RNA replication. This is La protein homolog from Aedes albopictus (Asian tiger mosquito).